Here is a 211-residue protein sequence, read N- to C-terminus: Molybdenum cofactor guanylyltransferase (211 aa).

GTP contacts are provided by residues 12 to 14, Lys-25, Asn-55, Asp-73, and Asp-103; that span reads LAG. Asp-103 contributes to the Mg(2+) binding site.

It belongs to the MobA family. As to quaternary structure, monomer. Mg(2+) is required as a cofactor.

It localises to the cytoplasm. The enzyme catalyses Mo-molybdopterin + GTP + H(+) = Mo-molybdopterin guanine dinucleotide + diphosphate. Its function is as follows. Transfers a GMP moiety from GTP to Mo-molybdopterin (Mo-MPT) cofactor (Moco or molybdenum cofactor) to form Mo-molybdopterin guanine dinucleotide (Mo-MGD) cofactor. In Albidiferax ferrireducens (strain ATCC BAA-621 / DSM 15236 / T118) (Rhodoferax ferrireducens), this protein is Molybdenum cofactor guanylyltransferase.